The following is a 312-amino-acid chain: Malate dehydrogenase (312 aa).

NAD(+) is bound by residues 7 to 13 (GAAGGIG) and aspartate 34. Substrate contacts are provided by arginine 81 and arginine 87. NAD(+)-binding positions include asparagine 94 and 117–119 (ITN). Residues asparagine 119 and arginine 153 each contribute to the substrate site. Histidine 177 functions as the Proton acceptor in the catalytic mechanism. Residue methionine 227 coordinates NAD(+).

The protein belongs to the LDH/MDH superfamily. MDH type 1 family. As to quaternary structure, homodimer.

It carries out the reaction (S)-malate + NAD(+) = oxaloacetate + NADH + H(+). Functionally, catalyzes the reversible oxidation of malate to oxaloacetate. This is Malate dehydrogenase from Citrobacter koseri (strain ATCC BAA-895 / CDC 4225-83 / SGSC4696).